A 506-amino-acid polypeptide reads, in one-letter code: GTPase Der (506 aa).

2 EngA-type G domains span residues 3–166 and 218–391; these read PVVA…GEQL and IKIA…ACAT. Residues 9-16, 56-60, 118-121, 224-231, 271-275, and 336-339 contribute to the GTP site; these read GRPNVGKS, DTGGI, NKTD, DTAGV, and NKWD. In terms of domain architecture, KH-like spans 392–476; that stretch reads QKTSTSMLTR…PIRIQFQEGN (85 aa).

It belongs to the TRAFAC class TrmE-Era-EngA-EngB-Septin-like GTPase superfamily. EngA (Der) GTPase family. As to quaternary structure, associates with the 50S ribosomal subunit.

GTPase that plays an essential role in the late steps of ribosome biogenesis. This is GTPase Der from Actinobacillus pleuropneumoniae serotype 5b (strain L20).